The sequence spans 87 residues: Acetolactate synthase isozyme 2 small subunit (87 aa).

An ACT domain is found at 5–78 (QVNVSARFNP…DVAHVAICQS (74 aa)).

In terms of assembly, tetramer of two large and two small chains. The cofactor is Mg(2+). It depends on thiamine diphosphate as a cofactor.

It carries out the reaction 2 pyruvate + H(+) = (2S)-2-acetolactate + CO2. It functions in the pathway amino-acid biosynthesis; L-isoleucine biosynthesis; L-isoleucine from 2-oxobutanoate: step 1/4. Its pathway is amino-acid biosynthesis; L-valine biosynthesis; L-valine from pyruvate: step 1/4. This is Acetolactate synthase isozyme 2 small subunit (ilvM) from Escherichia coli O6:H1 (strain CFT073 / ATCC 700928 / UPEC).